The following is a 91-amino-acid chain: Acylphosphatase (91 aa).

The Acylphosphatase-like domain maps to 5-91; it reads RLHAIVEGEV…KGEFTSFDTY (87 aa). Residues Arg-20 and Asn-38 contribute to the active site.

This sequence belongs to the acylphosphatase family.

The enzyme catalyses an acyl phosphate + H2O = a carboxylate + phosphate + H(+). The protein is Acylphosphatase (acyP) of Metallosphaera sedula (strain ATCC 51363 / DSM 5348 / JCM 9185 / NBRC 15509 / TH2).